Here is an 88-residue protein sequence, read N- to C-terminus: MYTIDISLRGTPLGLSVQRKESADAEALYQQVLAAIKSGNPTILEMTCDREPDKKAAVLVNEITAVQLSDKSGGAGAGRAAGFFELGA.

Belongs to the UPF0367 family.

This chain is UPF0367 protein AM1_1885, found in Acaryochloris marina (strain MBIC 11017).